Here is a 303-residue protein sequence, read N- to C-terminus: S-methyl-5'-thioadenosine phosphorylase 1 (303 aa).

Residues S14, 57 to 58 (RH), and 90 to 91 (SA) contribute to the phosphate site. A substrate-binding site is contributed by M198. S199 provides a ligand contact to phosphate. 222 to 224 (DYD) lines the substrate pocket.

This sequence belongs to the PNP/MTAP phosphorylase family. MTAP subfamily. In terms of assembly, homotrimer.

It is found in the cytoplasm. Its subcellular location is the nucleus. It carries out the reaction S-methyl-5'-thioadenosine + phosphate = 5-(methylsulfanyl)-alpha-D-ribose 1-phosphate + adenine. It participates in amino-acid biosynthesis; L-methionine biosynthesis via salvage pathway; S-methyl-5-thio-alpha-D-ribose 1-phosphate from S-methyl-5'-thioadenosine (phosphorylase route): step 1/1. In terms of biological role, catalyzes the reversible phosphorylation of S-methyl-5'-thioadenosine (MTA) to adenine and 5-methylthioribose-1-phosphate. Involved in the breakdown of MTA, a major by-product of polyamine biosynthesis. Responsible for the first step in the methionine salvage pathway after MTA has been generated from S-adenosylmethionine. Has broad substrate specificity with 6-aminopurine nucleosides as preferred substrates. This is S-methyl-5'-thioadenosine phosphorylase 1 from Puccinia graminis f. sp. tritici (strain CRL 75-36-700-3 / race SCCL) (Black stem rust fungus).